The chain runs to 124 residues: Small ribosomal subunit protein uS12 (124 aa).

The interval 1 to 25 is disordered; that stretch reads MATINQLVRKPRQATTYKSASPALD. A 3-methylthioaspartic acid modification is found at Asp89.

This sequence belongs to the universal ribosomal protein uS12 family. In terms of assembly, part of the 30S ribosomal subunit. Contacts proteins S8 and S17. May interact with IF1 in the 30S initiation complex.

Functionally, with S4 and S5 plays an important role in translational accuracy. In terms of biological role, interacts with and stabilizes bases of the 16S rRNA that are involved in tRNA selection in the A site and with the mRNA backbone. Located at the interface of the 30S and 50S subunits, it traverses the body of the 30S subunit contacting proteins on the other side and probably holding the rRNA structure together. The combined cluster of proteins S8, S12 and S17 appears to hold together the shoulder and platform of the 30S subunit. The protein is Small ribosomal subunit protein uS12 of Stenotrophomonas maltophilia (strain R551-3).